Reading from the N-terminus, the 73-residue chain is Large ribosomal subunit protein bL31 (73 aa).

Belongs to the bacterial ribosomal protein bL31 family. Type A subfamily. As to quaternary structure, part of the 50S ribosomal subunit.

In terms of biological role, binds the 23S rRNA. The chain is Large ribosomal subunit protein bL31 from Rhizobium etli (strain CIAT 652).